Reading from the N-terminus, the 121-residue chain is Small ribosomal subunit protein bS16m (121 aa).

The protein belongs to the bacterial ribosomal protein bS16 family. In terms of assembly, component of the mitochondrial small ribosomal subunit (mt-SSU). Mature yeast 74S mitochondrial ribosomes consist of a small (37S) and a large (54S) subunit. The 37S small subunit contains a 15S ribosomal RNA (15S mt-rRNA) and 34 different proteins. The 54S large subunit contains a 21S rRNA (21S mt-rRNA) and 46 different proteins.

It is found in the mitochondrion. Its function is as follows. Component of the mitochondrial ribosome (mitoribosome), a dedicated translation machinery responsible for the synthesis of mitochondrial genome-encoded proteins, including at least some of the essential transmembrane subunits of the mitochondrial respiratory chain. The mitoribosomes are attached to the mitochondrial inner membrane and translation products are cotranslationally integrated into the membrane. The sequence is that of Small ribosomal subunit protein bS16m (MRPS16) from Saccharomyces cerevisiae (strain ATCC 204508 / S288c) (Baker's yeast).